We begin with the raw amino-acid sequence, 640 residues long: Biosynthetic arginine decarboxylase (640 aa).

At Lys-105 the chain carries N6-(pyridoxal phosphate)lysine. 290–300 (FDVGGGLAIDY) lines the substrate pocket.

The protein belongs to the Orn/Lys/Arg decarboxylase class-II family. SpeA subfamily. Requires Mg(2+) as cofactor. The cofactor is pyridoxal 5'-phosphate.

It catalyses the reaction L-arginine + H(+) = agmatine + CO2. Functionally, catalyzes the biosynthesis of agmatine from arginine. The protein is Biosynthetic arginine decarboxylase of Vibrio vulnificus (strain CMCP6).